A 166-amino-acid polypeptide reads, in one-letter code: Large ribosomal subunit protein mL49 (166 aa).

Residues 54–77 (PTKIPEPPKHKHYPTPSGWQPPRD) form a disordered region.

This sequence belongs to the mitochondrion-specific ribosomal protein mL49 family. In terms of assembly, component of the mitochondrial ribosome large subunit (39S) which comprises a 16S rRNA and about 50 distinct proteins. Interacts with OXA1L.

Its subcellular location is the mitochondrion. The protein is Large ribosomal subunit protein mL49 (Mrpl49) of Mus musculus (Mouse).